Consider the following 418-residue polypeptide: Tryptophan synthase beta chain (418 aa).

K109 is modified (N6-(pyridoxal phosphate)lysine).

It belongs to the TrpB family. As to quaternary structure, tetramer of two alpha and two beta chains. Pyridoxal 5'-phosphate serves as cofactor.

The enzyme catalyses (1S,2R)-1-C-(indol-3-yl)glycerol 3-phosphate + L-serine = D-glyceraldehyde 3-phosphate + L-tryptophan + H2O. The protein operates within amino-acid biosynthesis; L-tryptophan biosynthesis; L-tryptophan from chorismate: step 5/5. Functionally, the beta subunit is responsible for the synthesis of L-tryptophan from indole and L-serine. This chain is Tryptophan synthase beta chain, found in Thermus thermophilus (strain ATCC 27634 / DSM 579 / HB8).